Here is a 1861-residue protein sequence, read N- to C-terminus: Golgi-specific brefeldin A-resistance guanine nucleotide exchange factor 1 (1861 aa).

The DCB; DCB:DCB domain and DCB:HUS domain interaction stretch occupies residues 1 to 211 (MVDKNIYIIQ…EPKSYVGTNM (211 aa)). The segment at 1–380 (MVDKNIYIIQ…SVHDMDYVNP (380 aa)) is interaction with RAB1B. Disordered stretches follow at residues 210-264 (NMKK…LTGG) and 289-353 (CTDS…VESI). Basic residues predominate over residues 227-241 (WKKQKRSPRPPRHTT). The segment covering 253-262 (NGATLPSNLT) has biased composition (polar residues). Phosphoserine is present on residues S349 and S352. Position 507 is a phosphothreonine (T507). The HUS; DCB:HUS domain interaction stretch occupies residues 530–550 (RIPSFVTELYINYDCDYYCSN). The tract at residues 603-634 (QEKKETARPGFEAVDGNPETNKSERATSDGKS) is disordered. In terms of domain architecture, SEC7 spans 692–882 (ELIEIKNKKK…EDMYHAIKNE (191 aa)). Residues 886–1372 (MPEEQTGLVR…LSRPGPSPLV (487 aa)) are phosphatidylinositol-phosphate binding; required for translocation to the leading edge and for ARF1 activation upon GPCR signaling. The segment covering 1286 to 1296 (TARADAPDAGA) has biased composition (low complexity). The tract at residues 1286-1335 (TARADAPDAGAQSDSELPSYHQNDVSLDRGYTSDSEVYTDHGRPGKIHRS) is disordered. The segment covering 1297-1310 (QSDSELPSYHQNDV) has biased composition (polar residues). S1298 carries the phosphoserine modification. The residue at position 1316 (Y1316) is a Phosphotyrosine. 3 positions are modified to phosphoserine: S1318, S1320, and S1335. A Phosphothreonine modification is found at T1337. 2 disordered regions span residues 1431–1486 (GCKS…EGVP) and 1727–1812 (PMPA…PLIL). The span at 1434 to 1448 (SQDKRSKSHKYDSKG) shows a compositional bias: basic and acidic residues. 3 positions are modified to phosphoserine: S1477, S1775, and S1786. A compositionally biased stretch (low complexity) spans 1776-1793 (TRAPSSSSPGSPMASSPS).

In terms of assembly, can form homodimers and probably homotetramers. Interacts with COPG1; the interaction is independent on ARF1 activation. Interacts with ARF1, ARF3, ARF4 and ARF5. Interacts with RAB1B (GTP-bound form); required for GBF1 membrane association. Interacts with GGA1, GGA2 and GGA3. Interacts with USO1. Interacts (via SEC7 domain) with PNPLA2 (via C-terminus); the interaction is direct. Interacts with ARMH3.

The protein localises to the golgi apparatus. The protein resides in the cis-Golgi network. Its subcellular location is the endoplasmic reticulum-Golgi intermediate compartment. It localises to the trans-Golgi network. It is found in the cytoplasm. The protein localises to the lipid droplet. The protein resides in the membrane. Its function is as follows. Guanine-nucleotide exchange factor (GEF) for members of the Arf family of small GTPases involved in trafficking in the early secretory pathway; its GEF activity initiates the coating of nascent vesicles via the localized generation of activated ARFs through replacement of GDP with GTP. Recruitment to cis-Golgi membranes requires membrane association of Arf-GDP and can be regulated by ARF1, ARF3, ARF4 and ARF5. Involved in the recruitment of the COPI coat complex to the endoplasmic reticulum exit sites (ERES), and the endoplasmic reticulum-Golgi intermediate (ERGIC) and cis-Golgi compartments which implicates ARF1 activation. Involved in COPI vesicle-dependent retrograde transport from the ERGIC and cis-Golgi compartments to the endoplasmic reticulum (ER). Involved in the trans-Golgi network recruitment of GGA1, GGA2, GGA3, BIG1, BIG2, and the AP-1 adaptor protein complex related to chlathrin-dependent transport; the function requires its GEF activity (probably at least in part on ARF4 and ARF5). Has GEF activity towards ARF1. Has in vitro GEF activity towards ARF5. Involved in the processing of PSAP. Required for the assembly of the Golgi apparatus. The AMPK-phosphorylated form is involved in Golgi disassembly during mitotis and under stress conditions. May be involved in the COPI vesicle-dependent recruitment of PNPLA2 to lipid droplets; however, this function is under debate. In neutrophils, involved in G protein-coupled receptor (GPCR)-mediated chemotaxis und superoxide production. Proposed to be recruited by phosphatidylinositol-phosphates generated upon GPCR stimulation to the leading edge where it recruits and activates ARF1, and is involved in recruitment of GIT2 and the NADPH oxidase complex. Plays a role in maintaining mitochondrial morphology. This chain is Golgi-specific brefeldin A-resistance guanine nucleotide exchange factor 1, found in Mus musculus (Mouse).